Reading from the N-terminus, the 127-residue chain is Photosystem II reaction center Psb28 protein (127 aa).

The disordered stretch occupies residues 107 to 127; it reads GLGYSQNQNSDQTDGDANAEA. Over residues 109 to 118 the composition is skewed to polar residues; the sequence is GYSQNQNSDQ.

It belongs to the Psb28 family. As to quaternary structure, part of the photosystem II complex.

The protein resides in the cellular thylakoid membrane. In Parasynechococcus marenigrum (strain WH8102), this protein is Photosystem II reaction center Psb28 protein.